A 398-amino-acid chain; its full sequence is Acetate kinase (398 aa).

Residue Asn8 participates in Mg(2+) binding. Lys15 serves as a coordination point for ATP. Position 89 (Arg89) interacts with substrate. The active-site Proton donor/acceptor is the Asp146. ATP contacts are provided by residues 206–210 (HIGNG), 283–285 (DMR), and 331–335 (GMGEN). Glu383 provides a ligand contact to Mg(2+).

It belongs to the acetokinase family. Homodimer. The cofactor is Mg(2+). Mn(2+) is required as a cofactor.

The protein resides in the cytoplasm. It carries out the reaction acetate + ATP = acetyl phosphate + ADP. It functions in the pathway metabolic intermediate biosynthesis; acetyl-CoA biosynthesis; acetyl-CoA from acetate: step 1/2. In terms of biological role, catalyzes the formation of acetyl phosphate from acetate and ATP. Can also catalyze the reverse reaction. In Streptococcus pyogenes serotype M2 (strain MGAS10270), this protein is Acetate kinase.